Consider the following 368-residue polypeptide: Phospho-N-acetylmuramoyl-pentapeptide-transferase (368 aa).

10 consecutive transmembrane segments (helical) span residues L31–L51, T73–L93, V98–M118, F134–T154, G175–S195, V213–A233, V249–A269, V271–L291, I296–V316, and K345–L365.

This sequence belongs to the glycosyltransferase 4 family. MraY subfamily. The cofactor is Mg(2+).

It localises to the cell inner membrane. It carries out the reaction UDP-N-acetyl-alpha-D-muramoyl-L-alanyl-gamma-D-glutamyl-meso-2,6-diaminopimeloyl-D-alanyl-D-alanine + di-trans,octa-cis-undecaprenyl phosphate = di-trans,octa-cis-undecaprenyl diphospho-N-acetyl-alpha-D-muramoyl-L-alanyl-D-glutamyl-meso-2,6-diaminopimeloyl-D-alanyl-D-alanine + UMP. Its pathway is cell wall biogenesis; peptidoglycan biosynthesis. In terms of biological role, catalyzes the initial step of the lipid cycle reactions in the biosynthesis of the cell wall peptidoglycan: transfers peptidoglycan precursor phospho-MurNAc-pentapeptide from UDP-MurNAc-pentapeptide onto the lipid carrier undecaprenyl phosphate, yielding undecaprenyl-pyrophosphoryl-MurNAc-pentapeptide, known as lipid I. This Leptospira interrogans serogroup Icterohaemorrhagiae serovar copenhageni (strain Fiocruz L1-130) protein is Phospho-N-acetylmuramoyl-pentapeptide-transferase.